Consider the following 255-residue polypeptide: MSDYIVVKCGGSMLNQLNDVFFDCIKKLQQKYKVVIVHGGGPEIDAKLKDCNINVEKRDGLRITPKEVMDVVQMVLCGSTNKKLVMNLQKHNLLAVGCSGCDGNLLQVQPVSEEIGYVGEVSYVETALLKGLINMGYIPVIAPIGVNGNEIYNINADNAAAGIAATLGAKELIFITDVDGILHEGNLVKETDESEIATFIETGVITGGMIPKVQAALASLKMGVQKISIVNGTKDFTEVTGECIGTTVTKGVSIA.

Residues 40 to 41 (GG), arginine 62, and asparagine 153 contribute to the substrate site.

Belongs to the acetylglutamate kinase family. ArgB subfamily.

Its subcellular location is the cytoplasm. It carries out the reaction N-acetyl-L-glutamate + ATP = N-acetyl-L-glutamyl 5-phosphate + ADP. It functions in the pathway amino-acid biosynthesis; L-arginine biosynthesis; N(2)-acetyl-L-ornithine from L-glutamate: step 2/4. In terms of biological role, catalyzes the ATP-dependent phosphorylation of N-acetyl-L-glutamate. This is Acetylglutamate kinase from Bacillus cereus (strain B4264).